We begin with the raw amino-acid sequence, 313 residues long: PDZ domain-containing protein GIPC2 (313 aa).

The span at 14 to 27 (KETSRLVEGEHTDA) shows a compositional bias: basic and acidic residues. The tract at residues 14–34 (KETSRLVEGEHTDAAVRSLPS) is disordered. The 81-residue stretch at 117–197 (EVNVYKSEDS…EELFTLTLIE (81 aa)) folds into the PDZ domain.

The protein belongs to the GIPC family. In terms of assembly, probably interacts with SEMA5A.

The protein localises to the cytoplasm. The chain is PDZ domain-containing protein GIPC2 (GIPC2) from Bos taurus (Bovine).